A 376-amino-acid polypeptide reads, in one-letter code: UPF0754 membrane protein SERP1382 (376 aa).

2 helical membrane-spanning segments follow: residues 4–24 (ILLVVFMIILGAIIGGVTNMI) and 356–376 (TLGFILGGIIGFFQGVIAIFV).

The protein belongs to the UPF0754 family.

It localises to the cell membrane. This Staphylococcus epidermidis (strain ATCC 35984 / DSM 28319 / BCRC 17069 / CCUG 31568 / BM 3577 / RP62A) protein is UPF0754 membrane protein SERP1382.